Consider the following 258-residue polypeptide: Imidazole glycerol phosphate synthase subunit HisF (258 aa).

Active-site residues include aspartate 11 and aspartate 130.

It belongs to the HisA/HisF family. Heterodimer of HisH and HisF.

The protein localises to the cytoplasm. It catalyses the reaction 5-[(5-phospho-1-deoxy-D-ribulos-1-ylimino)methylamino]-1-(5-phospho-beta-D-ribosyl)imidazole-4-carboxamide + L-glutamine = D-erythro-1-(imidazol-4-yl)glycerol 3-phosphate + 5-amino-1-(5-phospho-beta-D-ribosyl)imidazole-4-carboxamide + L-glutamate + H(+). The protein operates within amino-acid biosynthesis; L-histidine biosynthesis; L-histidine from 5-phospho-alpha-D-ribose 1-diphosphate: step 5/9. In terms of biological role, IGPS catalyzes the conversion of PRFAR and glutamine to IGP, AICAR and glutamate. The HisF subunit catalyzes the cyclization activity that produces IGP and AICAR from PRFAR using the ammonia provided by the HisH subunit. The sequence is that of Imidazole glycerol phosphate synthase subunit HisF from Yersinia pestis (strain Pestoides F).